Consider the following 398-residue polypeptide: Cytochrome b561 and DOMON domain-containing protein At3g61750 (398 aa).

Residues 1 to 23 (MKTLVGFYILCFLIGQDLPFLAA) form the signal peptide. The region spanning 64–177 (NTFVLRYSEN…PRRAVILAFS (114 aa)) is the DOMON domain. The Cytochrome b561 domain occupies 184 to 377 (LGRLTKHDDK…LEIFRIRGTI (194 aa)). His-220 is a heme b binding site. The next 2 membrane-spanning stretches (helical) occupy residues 222–242 (VMAI…ARYL) and 252–272 (LHIG…ILGI). Heme b-binding residues include His-253 and His-285. The next 3 membrane-spanning stretches (helical) occupy residues 287-307 (GIGI…FARP), 320-340 (YHHW…VLGI), and 351-371 (KIGY…LEIF). Heme b is bound at residue His-321.

Heme b serves as cofactor.

Its subcellular location is the membrane. Functionally, may act as a catecholamine-responsive trans-membrane electron transporter. The sequence is that of Cytochrome b561 and DOMON domain-containing protein At3g61750 from Arabidopsis thaliana (Mouse-ear cress).